Consider the following 122-residue polypeptide: Large ribosomal subunit protein uL14 (122 aa).

This sequence belongs to the universal ribosomal protein uL14 family. In terms of assembly, part of the 50S ribosomal subunit. Forms a cluster with proteins L3 and L19. In the 70S ribosome, L14 and L19 interact and together make contacts with the 16S rRNA in bridges B5 and B8.

In terms of biological role, binds to 23S rRNA. Forms part of two intersubunit bridges in the 70S ribosome. The sequence is that of Large ribosomal subunit protein uL14 from Paracoccus denitrificans (strain Pd 1222).